The following is a 776-amino-acid chain: MAAPGDPQDELLPLAGPGSQWLRDRGEGEDEAVTPKGATPAPQAGEPSPGLGARAREAASREAGSGPARQSPVAMETASTGVAGVSSAMDHTFSTTSKDGEGSCYTSLISDICYPPQEDSTYFTGILQRENGHVTISESPEELGTPGSSLPDVPGIESRGLFSSDSGIEMTPAESTEVNKILADPLDQMKAEAYKYIDITRPEEVKHQEQNHPELEDKDLDFKNKDTDISIKPEGVREPDEPAPVEGKIIKDHLLEESTFAPYIDDLSEEQRRAPQITTPVKITLTEIEPSVETTTQEKTPEKQDICLKPSPDTVPTVTVSEPEDDSPGSITPPSSGTEPSAAESQGKGSISEDELITAIKEAKGLSYETAESPRPVGQLADRPEVKARSGPPTIPSPLDHEASSAESGDSEIELVSEDPMAAEDALPSGYVSFGHVGGPPPSPASPSIQYSILREEREAELDSELIIESCDASSASEESPKREQDSPPMKPGALDAIREETGVRAEERAPSRRGLAEPASFLDYPSTEPQPGPELPPGDGALEPETPTLPRKPEEDASSHQSPAATKGPGPLGPGAPPPLLFLNKQKAIDLLYWRDIKQTGIVFGSFLLLLFSLTQFSVVSVVAYLALAALSATISFRIYKSVLQAVQKTDEGHPFKAYLELEITLSQEQIQKYTDCLQFYVNSTLKELRRLFLVQDLVDSLKFAVLMWLLTYVGALFNGLTLLLMAVVSMFTLPVVYVKHQAQIDQYLGLVRTHINAVVAKIQAKIPGAKRHAE.

Disordered stretches follow at residues 1 to 103, 136 to 168, 204 to 244, and 285 to 580; these read MAAP…GEGS, ISESPEELGTPGSSLPDVPGIESRGLFSSDSGI, EVKH…EPAP, and LTEI…APPP. A compositionally biased stretch (basic and acidic residues) spans 204–240; the sequence is EVKHQEQNHPELEDKDLDFKNKDTDISIKPEGVREPD. S327 carries the phosphoserine modification. Residues 328 to 341 show a composition bias toward low complexity; sequence PGSITPPSSGTEPS. Phosphoserine occurs at positions 350, 352, and 487. Positions 497–511 are enriched in basic and acidic residues; the sequence is AIREETGVRAEERAP. A Reticulon domain is found at 589–776; sequence AIDLLYWRDI…KIPGAKRHAE (188 aa). 2 consecutive transmembrane segments (helical) span residues 603-623 and 705-725; these read IVFGSFLLLLFSLTQFSVVSV and FAVLMWLLTYVGALFNGLTLL.

In terms of assembly, interacts with NDRG1. Interacts with BACE1. Interacts with TMEM33. Phosphorylated.

It localises to the endoplasmic reticulum membrane. It is found in the golgi apparatus membrane. In terms of biological role, inhibits amyloid precursor protein processing, probably by blocking BACE1 activity. In Pan troglodytes (Chimpanzee), this protein is Reticulon-1 (RTN1).